A 288-amino-acid chain; its full sequence is Polyamine aminopropyltransferase (288 aa).

Residues 9–238 (ETLHDQFGQY…GIMTFAWATD (230 aa)) form the PABS domain. Position 33 (Gln33) interacts with S-methyl-5'-thioadenosine. His64 and Asp88 together coordinate spermidine. S-methyl-5'-thioadenosine-binding positions include Glu108 and 140–141 (DG). Asp158 acts as the Proton acceptor in catalysis. Spermidine is bound at residue 158–161 (DCTD). S-methyl-5'-thioadenosine is bound at residue Pro165.

This sequence belongs to the spermidine/spermine synthase family. In terms of assembly, homodimer or homotetramer.

The protein localises to the cytoplasm. It catalyses the reaction S-adenosyl 3-(methylsulfanyl)propylamine + putrescine = S-methyl-5'-thioadenosine + spermidine + H(+). Its pathway is amine and polyamine biosynthesis; spermidine biosynthesis; spermidine from putrescine: step 1/1. Catalyzes the irreversible transfer of a propylamine group from the amino donor S-adenosylmethioninamine (decarboxy-AdoMet) to putrescine (1,4-diaminobutane) to yield spermidine. The protein is Polyamine aminopropyltransferase of Shigella boydii serotype 4 (strain Sb227).